A 187-amino-acid chain; its full sequence is Proline-rich protein 29 (187 aa).

Residues 133–187 form a disordered region; that stretch reads HQPPWQGEPRIQHQPPASRQEEVRDVPPPPPPSATGTVGADVPPASDYYDAESLP.

The polypeptide is Proline-rich protein 29 (Prr29) (Mus musculus (Mouse)).